The chain runs to 61 residues: 14-3-3-like protein (61 aa).

The protein belongs to the 14-3-3 family.

This Zea mays (Maize) protein is 14-3-3-like protein.